The primary structure comprises 388 residues: LL-diaminopimelate aminotransferase (388 aa).

The substrate site is built by Y16 and G41. Pyridoxal 5'-phosphate is bound by residues Y70, 104 to 105 (SK), Y129, N179, Y210, and 239 to 241 (SLS). Positions 105, 129, and 179 each coordinate substrate. K242 carries the post-translational modification N6-(pyridoxal phosphate)lysine. R250 is a pyridoxal 5'-phosphate binding site. R368 serves as a coordination point for substrate.

Belongs to the class-I pyridoxal-phosphate-dependent aminotransferase family. LL-diaminopimelate aminotransferase subfamily. In terms of assembly, homodimer. Pyridoxal 5'-phosphate is required as a cofactor.

It carries out the reaction (2S,6S)-2,6-diaminopimelate + 2-oxoglutarate = (S)-2,3,4,5-tetrahydrodipicolinate + L-glutamate + H2O + H(+). It functions in the pathway amino-acid biosynthesis; L-lysine biosynthesis via DAP pathway; LL-2,6-diaminopimelate from (S)-tetrahydrodipicolinate (aminotransferase route): step 1/1. In terms of biological role, involved in the synthesis of meso-diaminopimelate (m-DAP or DL-DAP), required for both lysine and peptidoglycan biosynthesis. Catalyzes the direct conversion of tetrahydrodipicolinate to LL-diaminopimelate. This Oleidesulfovibrio alaskensis (strain ATCC BAA-1058 / DSM 17464 / G20) (Desulfovibrio alaskensis) protein is LL-diaminopimelate aminotransferase.